Consider the following 367-residue polypeptide: Pyrimidine monooxygenase RutA (367 aa).

Residues 49–50 (IK), Asn-115, Glu-124, 140–141 (RY), and Ser-190 each bind FMN.

The protein belongs to the NtaA/SnaA/DszA monooxygenase family. RutA subfamily.

It carries out the reaction uracil + FMNH2 + NADH + O2 = (Z)-3-ureidoacrylate + FMN + NAD(+) + H2O + H(+). It catalyses the reaction thymine + FMNH2 + NADH + O2 = (Z)-2-methylureidoacrylate + FMN + NAD(+) + H2O + H(+). In terms of biological role, catalyzes the pyrimidine ring opening between N-3 and C-4 by an unusual flavin hydroperoxide-catalyzed mechanism, adding oxygen atoms in the process to yield ureidoacrylate peracid, that immediately reacts with FMN forming ureidoacrylate and FMN-N(5)-oxide. The FMN-N(5)-oxide reacts spontaneously with NADH to produce FMN. Requires the flavin reductase RutF to regenerate FMN in vivo. In Yersinia enterocolitica serotype O:8 / biotype 1B (strain NCTC 13174 / 8081), this protein is Pyrimidine monooxygenase RutA.